The chain runs to 303 residues: Pycsar effector protein BcPycTIR (303 aa).

22 to 138 is a binding site for a nucleoside 3',5'-cyclic phosphate; that stretch reads KLVGGDKGLA…RRMAKELSKR (117 aa). Residues 154-273 are TIR-like; sequence RVFVISSAEA…DMAGVTTIPY (120 aa).

As to quaternary structure, purified protein forms large 2-dimensional sheets when incubated with cUMP and shorter filaments in the presence of cCMP.

It localises to the cytoplasm. The catalysed reaction is NAD(+) + H2O = ADP-D-ribose + nicotinamide + H(+). Its activity is regulated as follows. Activated by cyclic UMP (cUMP) and to a lesser extent by cCMP. In terms of biological role, pycsar (pyrimidine cyclase system for antiphage resistance) provides immunity against bacteriophage. The pyrimidine cyclase (PycC) synthesizes cyclic nucleotides in response to infection; these serve as specific second messenger signals. The signals activate the adjacent effector, leading to bacterial cell death and abortive phage infection. A clade B Pycsar system. The effector protein of a two-gene Pycsar system. Upon activation by cyclic UMP (cUMP) degrades cellular NAD(+). Expression of this and adjacent uridylate cyclase BcPycC (AC A0A0J5ZXG5) probably confers resistance to bacteriophage. The genes are probably only expressed in response to bacteriophage infection. This protein probably only responds to cUMP (produced by its cognate NTP cyclase). The protein is Pycsar effector protein BcPycTIR of Burkholderia cepacia (Pseudomonas cepacia).